The sequence spans 178 residues: MENLARFLSTTLKQLRQQRGWSLSRLAEATGVSKAMLGQIERNESSPTVATLWKIATGLNVPFSTFISPPQSATPSVYDPQQQAMVITSLFPYDPQLCFEHFSIQMASGAISESTPHEKGVIEHVVVIDGQLDLCVDGEWQTLNCGEGVRFAADVTHIYRNGGEQTVHFHSLIHYPRS.

One can recognise an HTH cro/C1-type domain in the interval 12–66 (LKQLRQQRGWSLSRLAEATGVSKAMLGQIERNESSPTVATLWKIATGLNVPFSTF). Residues 23-42 (LSRLAEATGVSKAMLGQIER) constitute a DNA-binding region (H-T-H motif). The Cupin type-2 domain occupies 105-171 (QMASGAISES…GGEQTVHFHS (67 aa)).

Functionally, regulates the expression of 12-16 transcription units involved in various steps of sulfur utilization. Represses expression of pfkB, fliZ, cysE, ydcO and its own expression. Activates expression of ypfN. Acts by binding to SutR boxes. In Escherichia coli (strain K12), this protein is HTH-type transcriptional regulator SutR.